The following is a 210-amino-acid chain: Large ribosomal subunit protein uL4 (210 aa).

This sequence belongs to the universal ribosomal protein uL4 family. As to quaternary structure, part of the 50S ribosomal subunit.

Functionally, one of the primary rRNA binding proteins, this protein initially binds near the 5'-end of the 23S rRNA. It is important during the early stages of 50S assembly. It makes multiple contacts with different domains of the 23S rRNA in the assembled 50S subunit and ribosome. In terms of biological role, forms part of the polypeptide exit tunnel. This chain is Large ribosomal subunit protein uL4 (rplD), found in Thermus thermophilus.